The following is a 335-amino-acid chain: MYPLIKKALFNLDAENAHQLAIQSLKLFGKTPFSLACSLPDNPTEVMGLRFKNPIGLAAGADKNGEAIDGFAKLGFGFIEVGTVTPVAQDGNPRPRQFRILEAEGIINRNGFNNLGVDVLIENVKKAKYNGILGINIGKNATTPIEHSLDDYQICLRKVYPHASYVTVNISSPNTKNLRSLQYGEALDDLLRSLKAEQAQLSQKFGGYKPLVLKIAPDLTAEEIASVADSLVHHQIDAVIAGNTTLSRDSVAGLPFADQQGGLSGKPLNALSTQLISQLSQELNGKLPIIGSGGIHSVQSGQEKINAGASLLQLYSAMIYQGPDLVRQLVRKISI.

FMN-binding positions include 59–63 (AGADK) and Thr83. Lys63 lines the substrate pocket. 108–112 (NRNGF) lines the substrate pocket. Positions 136 and 169 each coordinate FMN. Asn169 provides a ligand contact to substrate. The Nucleophile role is filled by Ser172. Asn174 contacts substrate. The FMN site is built by Lys214 and Gly242. 243 to 244 (NT) contributes to the substrate binding site. Residues Gly265, Gly294, and 315 to 316 (YS) contribute to the FMN site.

Belongs to the dihydroorotate dehydrogenase family. Type 2 subfamily. Monomer. It depends on FMN as a cofactor.

The protein localises to the cell membrane. The catalysed reaction is (S)-dihydroorotate + a quinone = orotate + a quinol. Its pathway is pyrimidine metabolism; UMP biosynthesis via de novo pathway; orotate from (S)-dihydroorotate (quinone route): step 1/1. Functionally, catalyzes the conversion of dihydroorotate to orotate with quinone as electron acceptor. In Glaesserella parasuis serovar 5 (strain SH0165) (Haemophilus parasuis), this protein is Dihydroorotate dehydrogenase (quinone).